The chain runs to 130 residues: Ribosome-binding factor A (130 aa).

This sequence belongs to the RbfA family. In terms of assembly, monomer. Binds 30S ribosomal subunits, but not 50S ribosomal subunits or 70S ribosomes.

The protein resides in the cytoplasm. Functionally, one of several proteins that assist in the late maturation steps of the functional core of the 30S ribosomal subunit. Associates with free 30S ribosomal subunits (but not with 30S subunits that are part of 70S ribosomes or polysomes). Required for efficient processing of 16S rRNA. May interact with the 5'-terminal helix region of 16S rRNA. This is Ribosome-binding factor A from Methylibium petroleiphilum (strain ATCC BAA-1232 / LMG 22953 / PM1).